Here is a 434-residue protein sequence, read N- to C-terminus: MANFDLTRINCQYLDRHLTFPLLEFLCGKEIYNQQELLEYILETVNKTNMIDYTMDTRKRLNLSQEMPDELVQRKAEVLATLKQLQNEVAPIMKATDILKNGESMKDSKTFVNALQKDYNFKVEHLESAYKLAKYLYECGNYQESTSYLYFCLIVMSPNDKNYLNVLWGKLAAEILTLNWNTALEDLTRLRDYIDSANFSTIQALQQRTWLIHWSVLVFFNHPKGRDLIIEMFLYKPLYLNAIQTMCPHIMRYLATAVVINRTRRNALKDLIKVIQQESYTYRDPITEFLECLYVNFDFEGARLKLHECQTVILNDFFIVACLNEFVEDARLMIFETFCRIHQCITISMLADKLNMKPNEAECWIVNLIRNARLNAKIDSKLGHVVMGTQPLSPYQQLVEKIDSLSMRSEHLAGLIERKSKQNNKESIDSWKYY.

One can recognise a PCI domain in the interval 219 to 392 (FFNHPKGRDL…GHVVMGTQPL (174 aa)).

Belongs to the eIF-3 subunit E family. As to quaternary structure, component of the eukaryotic translation initiation factor 3 (eIF-3) complex. The eIF-3 complex interacts with pix. Interacts with mxt.

The protein resides in the cytoplasm. Component of the eukaryotic translation initiation factor 3 (eIF-3) complex, which is involved in protein synthesis of a specialized repertoire of mRNAs and, together with other initiation factors, stimulates binding of mRNA and methionyl-tRNAi to the 40S ribosome. The eIF-3 complex specifically targets and initiates translation of a subset of mRNAs involved in cell proliferation. The sequence is that of Eukaryotic translation initiation factor 3 subunit E (eIF3-S6) from Drosophila pseudoobscura pseudoobscura (Fruit fly).